A 201-amino-acid chain; its full sequence is MQTSPLLESLMEALRCLPGVGPRSAQRMAFQLLQRNRSGGMRLAQALTQAMSEIGHCSDCRTFTEQDVCAICSNPRRQQNGLVCVVESPADIHAIEQTGQFAGRYFVLMGHLSPLDGIGPDDIGLGRLEERLQVESFNEVILATNPTVEGDATANYIAELCAQHGVMASRIAHGVPVGGELEMVDGTTLSHSLAGRQPFRF.

The segment at 57 to 72 adopts a C4-type zinc-finger fold; that stretch reads CSDCRTFTEQDVCAIC. The Toprim domain maps to 81–176; sequence GLVCVVESPA…MASRIAHGVP (96 aa).

This sequence belongs to the RecR family.

May play a role in DNA repair. It seems to be involved in an RecBC-independent recombinational process of DNA repair. It may act with RecF and RecO. This Pectobacterium atrosepticum (strain SCRI 1043 / ATCC BAA-672) (Erwinia carotovora subsp. atroseptica) protein is Recombination protein RecR.